The primary structure comprises 306 residues: MSNEFITFEKISRKSWKQLHQKSKPLLTQEELTSITSLNDNIDINDVIEVYLPLIHLIQIYKIAQENLSFSKSLFLKKDIQQRPFIIGISGSVAVGKSTTSRLLQLLLARTHKTSTVELVTTDGFLYPNSTLIKNNMLNRKGFPESYNMELLLNFLDTVKGGQTASAPVYSHEIYDIVPDQQQTFTNPDFLIIEGINVFQNQQNNRLYMSDYFDFSIYIDADSHHIEQWYLERFLSLLELAKHDPANYYTRYTSLPQNEAIAFAKKVWKTINLENLEKFIEPTRNRAELILHKAADHKIDEIYLKK.

Residue 91–98 (GSVAVGKS) coordinates ATP.

The protein belongs to the prokaryotic pantothenate kinase family.

Its subcellular location is the cytoplasm. The catalysed reaction is (R)-pantothenate + ATP = (R)-4'-phosphopantothenate + ADP + H(+). Its pathway is cofactor biosynthesis; coenzyme A biosynthesis; CoA from (R)-pantothenate: step 1/5. In Streptococcus equi subsp. zooepidemicus (strain MGCS10565), this protein is Pantothenate kinase.